A 208-amino-acid polypeptide reads, in one-letter code: LexA repressor (208 aa).

Residues 30 to 50 (VREIGKSVGLSSSSTVAAYLE) constitute a DNA-binding region (H-T-H motif). Catalysis depends on for autocatalytic cleavage activity residues Ser129 and Lys167.

Belongs to the peptidase S24 family. In terms of assembly, homodimer.

The catalysed reaction is Hydrolysis of Ala-|-Gly bond in repressor LexA.. In terms of biological role, represses a number of genes involved in the response to DNA damage (SOS response), including recA and lexA. In the presence of single-stranded DNA, RecA interacts with LexA causing an autocatalytic cleavage which disrupts the DNA-binding part of LexA, leading to derepression of the SOS regulon and eventually DNA repair. The polypeptide is LexA repressor (Lacticaseibacillus casei (strain BL23) (Lactobacillus casei)).